A 164-amino-acid polypeptide reads, in one-letter code: Siroheme decarboxylase alpha subunit (164 aa).

It belongs to the Ahb/Nir family. Forms a heterodimer composed of AhbA and AhbB.

The catalysed reaction is siroheme + 2 H(+) = 12,18-didecarboxysiroheme + 2 CO2. Its pathway is porphyrin-containing compound metabolism; protoheme biosynthesis. In terms of biological role, involved in siroheme-dependent heme b biosynthesis. Catalyzes the decarboxylation of siroheme into didecarboxysiroheme. This is Siroheme decarboxylase alpha subunit from Oleidesulfovibrio alaskensis (strain ATCC BAA-1058 / DSM 17464 / G20) (Desulfovibrio alaskensis).